The chain runs to 311 residues: Glycine-betaine-binding protein (311 aa).

An N-terminal signal peptide occupies residues 1–23 (MNRLIRSLCLACAGLFAAGLAQA).

It belongs to the OsmX family.

It is found in the periplasm. In terms of biological role, binds glycine-betaine. The sequence is that of Glycine-betaine-binding protein from Pseudomonas aeruginosa (strain ATCC 15692 / DSM 22644 / CIP 104116 / JCM 14847 / LMG 12228 / 1C / PRS 101 / PAO1).